A 154-amino-acid polypeptide reads, in one-letter code: Prefoldin subunit 2 (154 aa).

Disordered regions lie at residues 1–20 (MADS…GKGA) and 126–154 (LMGE…VLVS). The segment covering 9–18 (GKSGGSGTGK) has biased composition (gly residues). A compositionally biased stretch (basic and acidic residues) spans 126–139 (LMGEDEKPAAKENS). Residues 141-154 (GAGAKSSSAGVLVS) are compositionally biased toward low complexity.

The protein belongs to the prefoldin subunit beta family. Heterohexamer of two PFD-alpha type and four PFD-beta type subunits. Component of the PAQosome complex which is responsible for the biogenesis of several protein complexes and which consists of R2TP complex members RUVBL1, RUVBL2, RPAP3 and PIH1D1, URI complex members PFDN2, PFDN6, PDRG1, UXT and URI1 as well as ASDURF, POLR2E and DNAAF10/WDR92. Interacts with URI1; the interaction is phosphorylation-dependent and occurs in a growth-dependent manner.

It localises to the nucleus. The protein resides in the cytoplasm. The protein localises to the mitochondrion. Functionally, binds specifically to cytosolic chaperonin (c-CPN) and transfers target proteins to it. Binds to nascent polypeptide chain and promotes folding in an environment in which there are many competing pathways for nonnative proteins. The sequence is that of Prefoldin subunit 2 (Pfdn2) from Rattus norvegicus (Rat).